We begin with the raw amino-acid sequence, 170 residues long: Neurotensin/neuromedin N (170 aa).

An N-terminal signal peptide occupies residues 1 to 23; that stretch reads MMAGMKIQLVCMILLAFSSWSLC.

Belongs to the neurotensin family. Interacts with NTSR1. Interacts with SORT1. Interacts with SORL1. Post-translationally, neurotensin is cleaved and degraded by Angiotensin-converting enzyme (ACE) and neprilysin (MME). In terms of tissue distribution, brain and gut.

The protein resides in the secreted. It localises to the cytoplasmic vesicle. It is found in the secretory vesicle. Functionally, neurotensin may play an endocrine or paracrine role in the regulation of fat metabolism. It causes contraction of smooth muscle. This Bos taurus (Bovine) protein is Neurotensin/neuromedin N (NTS).